Here is a 226-residue protein sequence, read N- to C-terminus: Ribonuclease 3 (226 aa).

An RNase III domain is found at isoleucine 6–asparagine 128. Residue glutamate 41 coordinates Mg(2+). Aspartate 45 is a catalytic residue. Positions 114 and 117 each coordinate Mg(2+). Residue glutamate 117 is part of the active site. The 71-residue stretch at aspartate 155–leucine 225 folds into the DRBM domain.

This sequence belongs to the ribonuclease III family. In terms of assembly, homodimer. The cofactor is Mg(2+).

The protein resides in the cytoplasm. The catalysed reaction is Endonucleolytic cleavage to 5'-phosphomonoester.. Its function is as follows. Digests double-stranded RNA. Involved in the processing of primary rRNA transcript to yield the immediate precursors to the large and small rRNAs (23S and 16S). Processes some mRNAs, and tRNAs when they are encoded in the rRNA operon. Processes pre-crRNA and tracrRNA of type II CRISPR loci if present in the organism. The polypeptide is Ribonuclease 3 (Salmonella enteritidis PT4 (strain P125109)).